Reading from the N-terminus, the 132-residue chain is RING-H2 finger protein ATL39 (132 aa).

Residues 10–30 (TIVFAFASIGFIAFYIINYYI) form a helical membrane-spanning segment. The segment at 85 to 127 (CVVCLNEFKDDETLRLVPPCVHVFHADCVDIWLSHSSTCPICR) adopts an RING-type; atypical zinc-finger fold.

It belongs to the RING-type zinc finger family. ATL subfamily.

It localises to the membrane. It catalyses the reaction S-ubiquitinyl-[E2 ubiquitin-conjugating enzyme]-L-cysteine + [acceptor protein]-L-lysine = [E2 ubiquitin-conjugating enzyme]-L-cysteine + N(6)-ubiquitinyl-[acceptor protein]-L-lysine.. It functions in the pathway protein modification; protein ubiquitination. The sequence is that of RING-H2 finger protein ATL39 (ATL39) from Arabidopsis thaliana (Mouse-ear cress).